A 159-amino-acid chain; its full sequence is Peripheral myelin protein 22 (159 aa).

Residue Met-1 is a topological domain, cytoplasmic. Residues 2–31 form a helical membrane-spanning segment; sequence LLLLLGIIVLHVAVLVLLFVATIVSQWIVG. Residues 32–64 are Extracellular-facing; the sequence is NGHATDLWQNCSTTSGNVQHCLSSSANEWLQSV. Asn-41 is a glycosylation site (N-linked (GlcNAc...) asparagine). Residues 65-91 traverse the membrane as a helical segment; it reads QATMILSIIFSVLSLFLFFCQLFTLTK. At 92-95 the chain is on the cytoplasmic side; sequence GGRF. The helical transmembrane segment at 96–119 threads the bilayer; sequence YITGIFQILAGLCVMSAASIYTVR. The Extracellular portion of the chain corresponds to 120-133; that stretch reads HPEWHLDSAYSYGF. The chain crosses the membrane as a helical span at residues 134-156; sequence AYILAWVAFPLALLSGVVYVILR. The Cytoplasmic portion of the chain corresponds to 157 to 159; sequence KRE.

Belongs to the PMP-22/EMP/MP20 family. Post-translationally, ubiquitinated by the DCX(DCAF13) E3 ubiquitin ligase complex, leading to its degradation.

Its subcellular location is the cell membrane. In terms of biological role, might be involved in growth regulation, and in myelinization in the peripheral nervous system. The protein is Peripheral myelin protein 22 (PMP22) of Equus caballus (Horse).